The sequence spans 69 residues: Cytochrome c oxidase subunit 8A, mitochondrial (69 aa).

The N-terminal 25 residues, 1-25 (MSVLTSLLLRGLTGSARRLPVPRAK), are a transit peptide targeting the mitochondrion. Topologically, residues 26 to 36 (VHSMPPEEELG) are mitochondrial matrix. Residues 37-60 (IMEKAIGLTFCFVSLFLPAGWILS) form a helical membrane-spanning segment. The Mitochondrial intermembrane portion of the chain corresponds to 61 to 69 (HLEDYKRPE).

This sequence belongs to the cytochrome c oxidase VIII family. Component of the cytochrome c oxidase (complex IV, CIV), a multisubunit enzyme composed of 14 subunits. The complex is composed of a catalytic core of 3 subunits MT-CO1, MT-CO2 and MT-CO3, encoded in the mitochondrial DNA, and 11 supernumerary subunits COX4I, COX5A, COX5B, COX6A, COX6B, COX6C, COX7A, COX7B, COX7C, COX8 and NDUFA4, which are encoded in the nuclear genome. The complex exists as a monomer or a dimer and forms supercomplexes (SCs) in the inner mitochondrial membrane with NADH-ubiquinone oxidoreductase (complex I, CI) and ubiquinol-cytochrome c oxidoreductase (cytochrome b-c1 complex, complex III, CIII), resulting in different assemblies (supercomplex SCI(1)III(2)IV(1) and megacomplex MCI(2)III(2)IV(2)). Post-translationally, in response to mitochondrial stress, the precursor protein is ubiquitinated by the SIFI complex in the cytoplasm before mitochondrial import, leading to its degradation. Within the SIFI complex, UBR4 initiates ubiquitin chain that are further elongated or branched by KCMF1.

It localises to the mitochondrion inner membrane. Its pathway is energy metabolism; oxidative phosphorylation. Functionally, component of the cytochrome c oxidase, the last enzyme in the mitochondrial electron transport chain which drives oxidative phosphorylation. The respiratory chain contains 3 multisubunit complexes succinate dehydrogenase (complex II, CII), ubiquinol-cytochrome c oxidoreductase (cytochrome b-c1 complex, complex III, CIII) and cytochrome c oxidase (complex IV, CIV), that cooperate to transfer electrons derived from NADH and succinate to molecular oxygen, creating an electrochemical gradient over the inner membrane that drives transmembrane transport and the ATP synthase. Cytochrome c oxidase is the component of the respiratory chain that catalyzes the reduction of oxygen to water. Electrons originating from reduced cytochrome c in the intermembrane space (IMS) are transferred via the dinuclear copper A center (CU(A)) of subunit 2 and heme A of subunit 1 to the active site in subunit 1, a binuclear center (BNC) formed by heme A3 and copper B (CU(B)). The BNC reduces molecular oxygen to 2 water molecules using 4 electrons from cytochrome c in the IMS and 4 protons from the mitochondrial matrix. The polypeptide is Cytochrome c oxidase subunit 8A, mitochondrial (COX8A) (Macaca fascicularis (Crab-eating macaque)).